Reading from the N-terminus, the 366-residue chain is Putative [LysW]-aminoadipate semialdehyde/glutamate semialdehyde transaminase (366 aa).

Pyridoxal 5'-phosphate-binding positions include 90–91 (GT) and phenylalanine 117. Residue arginine 120 coordinates substrate. Residue 202-205 (DEVQ) participates in pyridoxal 5'-phosphate binding. An N6-(pyridoxal phosphate)lysine modification is found at lysine 230. Serine 254 contributes to the substrate binding site. Threonine 255 lines the pyridoxal 5'-phosphate pocket.

The protein belongs to the class-III pyridoxal-phosphate-dependent aminotransferase family. LysJ subfamily. As to quaternary structure, homodimer. The cofactor is pyridoxal 5'-phosphate.

It localises to the cytoplasm. It carries out the reaction [amino-group carrier protein]-C-terminal-gamma-(L-lysyl)-L-glutamate + 2-oxoglutarate = [amino-group carrier protein]-C-terminal-N-(1-carboxy-5-oxopentan-1-yl)-L-glutamine + L-glutamate. It catalyses the reaction [amino-group carrier protein]-C-terminal-gamma-(L-ornithyl)-L-glutamate + 2-oxoglutarate = [amino-group carrier protein]-C-terminal-gamma-(L-glutamyl-5-semialdehyde)-L-glutamate + L-glutamate. The protein operates within amino-acid biosynthesis; L-lysine biosynthesis via AAA pathway; L-lysine from L-alpha-aminoadipate (Thermus route): step 4/5. Its pathway is amino-acid biosynthesis; L-arginine biosynthesis. Involved in both the arginine and lysine biosynthetic pathways. The protein is Putative [LysW]-aminoadipate semialdehyde/glutamate semialdehyde transaminase of Pyrococcus horikoshii (strain ATCC 700860 / DSM 12428 / JCM 9974 / NBRC 100139 / OT-3).